The primary structure comprises 562 residues: MDPDKEDKTLELMCSLPRSVWLGCSSVAESLCALRCLQSLPSSRAHNQNMTGMESQINTDEVSPKKTTVFKLGNGSLAGSRKRPSQGSFDKEKDLCIQLFDQWSESDQVEFVEHLIARMCHYQHGHINSYLKPMLQRDFITALPARGLDHIAENILSFLDARSLCSAELVCREWQRVISDGMLWKKLIERMVRTDPLWKGLSERHQWEKYLFKNRTNEVPPNSYYHSLYPKIIQDIETIEANWRCGRHNLQRIQCRSENSKGVYCLQYDDDKIISGLRDNSIKIWDKQSLECLKVLTGHTGSVLCLQYDERVIVTGSSDSTVRVWDVSSGEVLNTLIHHNEAVLHLRFCNGLMVTCSKDRSIAVWDMASATDISLRRVLVGHRAAVNVVDFDDKYIVSASGDRTIKVWSTSTCEFVRTLNGHKRGIACLQYRDRLVVSGSSDNTIRLWDIECGACLRVLEGHEELVRCIRFDNKRIVSGAYDGKIKVWDLQAALDPRAPASTLCLRTLVEHSGRVFRLQFDEFQIISSSHDDTILIWDFLNVSSNGQSDGRSPSRTYTYVSR.

The segment at 87-136 is homodimerization domain D; that stretch reads GSFDKEKDLCIQLFDQWSESDQVEFVEHLIARMCHYQHGHINSYLKPMLQ. In terms of domain architecture, F-box spans 149–187; sequence DHIAENILSFLDARSLCSAELVCREWQRVISDGMLWKKL. WD repeat units follow at residues 256 to 295, 296 to 335, 336 to 375, 379 to 418, 419 to 458, 459 to 491, and 508 to 538; these read RSEN…CLKV, LTGH…VLNT, LIHH…DISL, LVGH…FVRT, LNGH…CLRV, LEGH…WDLQ, and LVEH…LIWD.

Self-associates. Component of the SCF(FBXW11) complex.

It is found in the cytoplasm. The protein resides in the nucleus. It participates in protein modification; protein ubiquitination. Functionally, substrate recognition component of a SCF (SKP1-CUL1-F-box protein) E3 ubiquitin-protein ligase complex which mediates the ubiquitination and subsequent proteasomal degradation of target proteins. Probably recognizes and binds to phosphorylated target proteins: the interaction with substrates requires the phosphorylation of the two serine residues in the substrates' destruction motif D-S-G-X(2,3,4)-S. SCF(FBXW11) mediates the ubiquitination of phosphorylated CTNNB1 and participates in Wnt signaling regulation. Participates in Wnt signaling regulation, and plays a role in eye and jaw development. SCF(FBXW11) plays a key role in NF-kappa-B activation by mediating ubiquitination of phosphorylated NFKBIA, leading to its degradation by the proteasome, thereby allowing the associated NF-kappa-B complex to translocate into the nucleus and to activate transcription. The sequence is that of F-box and WD repeat domain-containing 11-A from Danio rerio (Zebrafish).